The chain runs to 882 residues: Valine--tRNA ligase (882 aa).

The 'HIGH' region motif lies at 45–55; the sequence is PNVTGKLHLGH. Residues 519–523 carry the 'KMSKS' region motif; that stretch reads KMSKS. ATP is bound at residue Lys522. The stretch at 808–882 forms a coiled coil; that stretch reads LADLLNVEEE…RIAEMKKIKS (75 aa).

It belongs to the class-I aminoacyl-tRNA synthetase family. ValS type 1 subfamily. In terms of assembly, monomer.

It is found in the cytoplasm. The enzyme catalyses tRNA(Val) + L-valine + ATP = L-valyl-tRNA(Val) + AMP + diphosphate. Functionally, catalyzes the attachment of valine to tRNA(Val). As ValRS can inadvertently accommodate and process structurally similar amino acids such as threonine, to avoid such errors, it has a 'posttransfer' editing activity that hydrolyzes mischarged Thr-tRNA(Val) in a tRNA-dependent manner. The protein is Valine--tRNA ligase of Streptococcus pyogenes serotype M28 (strain MGAS6180).